Consider the following 253-residue polypeptide: Spermatogenesis-associated protein 9 (253 aa).

A helical transmembrane segment spans residues Leu-144–Leu-166. Positions Ala-210–Lys-228 are enriched in basic and acidic residues. A disordered region spans residues Ala-210 to Ala-231.

It is found in the membrane. In terms of biological role, may play at role in testicular development/spermatogenesis and may be an important factor in male infertility. The polypeptide is Spermatogenesis-associated protein 9 (SPATA9) (Bos taurus (Bovine)).